The primary structure comprises 103 residues: Large ribosomal subunit protein bL21 (103 aa).

Belongs to the bacterial ribosomal protein bL21 family. As to quaternary structure, part of the 50S ribosomal subunit. Contacts protein L20.

Functionally, this protein binds to 23S rRNA in the presence of protein L20. In Shewanella piezotolerans (strain WP3 / JCM 13877), this protein is Large ribosomal subunit protein bL21.